A 152-amino-acid polypeptide reads, in one-letter code: UPF0266 membrane protein YobD (152 aa).

3 helical membrane passes run 6–26 (LVLILFIAALLAFAIYDQFIM), 45–65 (IDSVIFVGLIVILIYNNVTNH), and 67–87 (ALITTWLLSALALMGFYIFWI).

This sequence belongs to the UPF0266 family.

Its subcellular location is the cell inner membrane. In Escherichia coli O157:H7 (strain EC4115 / EHEC), this protein is UPF0266 membrane protein YobD.